An 870-amino-acid polypeptide reads, in one-letter code: MQKDTLKPGEAPVRAAPHTPMMTQYHAIKAEYPDTLVFYRMGDFYEVFYADAEKASSLLDITLTKRGQSAGEPVVMAGIPFHALEGYLAKLIKLGESVAICEQVGDVATAKGPVERKVVRVVTPGTLTDTELLSDKTESILLAVHQGARNTCGLAWLSVTQGEIHLAHCANGELETWLARIAPSELLYNVDATPAFEQRLQTQRCAASARPAWQFDAALGVRRLLDQLKVASLASWHAEGLNEAHAAASALLGYAEHTQGRALPHVQGLQVVRSGELIELPPATRRNLELTQTLRGEDSPTLFSLLDTCTTGMGSRALKSWLLSPRRDRAQAASRLEAITQLRSGAQQTLRTQLKGCSDVERITARIALRQVRPRELVALQLTLQKAELLTPVDSAQIPLLTTIFEDLQPPLGCAELLGQCILDEPAALIRDGGVINHGLDAELDELRAIQTNCDGFLLDLEIREKARTGIANLRVQFNKVHGFYIEVTQGQLDKVPADYRRRQTLKNAERYITPELKTFEDKALSAQERALAREKWLYEQLLDQLQEFVPALSRLARAIAALDALCALAERSLTLNWCAPVFVKEPCIAIGQGRHPVVEARLAETGGGAFIANDCSLTGKSRMQMITGPNMGGKSTYMRQVALIVLLASVGSYVPASACRLGPIDAIHTRIGAADDVANAQSTFMLEMLEAAQILHAATPYSLVLMDEIGRGTSTFDGLALAGGIAAYLHNKAQAFTLFATHYFELTEFAAQHHGAMNVHVSAVESGSDIVFLHHIEPGPASKSYGIAVAKLAGVPAAVVNHARHALAALEAQQSQASAQVDLFAAPPEAPASGQTAIDKALASIDPDILSPREALEALYQLKKLASAA.

629–636 (GPNMGGKS) serves as a coordination point for ATP.

This sequence belongs to the DNA mismatch repair MutS family.

This protein is involved in the repair of mismatches in DNA. It is possible that it carries out the mismatch recognition step. This protein has a weak ATPase activity. The polypeptide is DNA mismatch repair protein MutS (Polaromonas naphthalenivorans (strain CJ2)).